A 243-amino-acid polypeptide reads, in one-letter code: Ion-translocating oxidoreductase complex subunit E (243 aa).

6 helical membrane-spanning segments follow: residues 40–60, 72–92, 94–114, 129–149, 152–172, and 183–203; these read LGMG…ISAL, AFIL…NAWL, DLHK…AILG, ALDG…VGAI, ILGS…HFAF, and GFLI…LFAL.

This sequence belongs to the NqrDE/RnfAE family. In terms of assembly, the complex is composed of six subunits: RnfA, RnfB, RnfC, RnfD, RnfE and RnfG.

Its subcellular location is the cellular chromatophore membrane. In terms of biological role, part of a membrane-bound complex that couples electron transfer with translocation of ions across the membrane. Required for nitrogen fixation. Involved in electron transfer to nitrogenase. This is Ion-translocating oxidoreductase complex subunit E from Rhodobacter capsulatus (Rhodopseudomonas capsulata).